The sequence spans 420 residues: 26S proteasome non-ATPase regulatory subunit 4 (420 aa).

Residues 1 to 174 (MSQEATIIAV…TGSHLISVAP (174 aa)) enclose the VWFA domain. UIM domains follow at residues 210–229 (AEDPDLLYALRVSMEDQRMR), 255–274 (SEEAMLQQALAMSMQMNNTE), and 288–307 (SEEDQIAYALRMSLQQMGEE). The disordered stretch occupies residues 392 to 420 (RKAINALTKSQSQRGSKKDEKEDEDKQNS). Positions 407-420 (SKKDEKEDEDKQNS) are enriched in basic and acidic residues.

Belongs to the proteasome subunit S5A family. In terms of assembly, the 26S proteasome is composed of a core protease, known as the 20S proteasome, capped at one or both ends by the 19S regulatory complex (RC). The RC is composed of at least 18 different subunits in two subcomplexes, the base and the lid, which form the portions proximal and distal to the 20S proteolytic core, respectively.

Binds and presumably selects ubiquitin-conjugates for destruction. The chain is 26S proteasome non-ATPase regulatory subunit 4 from Schistosoma mansoni (Blood fluke).